The following is a 576-amino-acid chain: FtsZ-localized protein C (576 aa).

As to quaternary structure, interacts with FtsZ filaments.

The protein resides in the cytoplasm. The protein localises to the cell inner membrane. Membrane anchor for FtsZ. Binds and recruits FtsZ polymers to membranes early in the cell cycle. May also improve the efficiency of cytokinesis through the regulation of cell wall hydrolysis. The chain is FtsZ-localized protein C from Caulobacter vibrioides (strain NA1000 / CB15N) (Caulobacter crescentus).